The primary structure comprises 435 residues: Serine/threonine-protein kinase 40 (435 aa).

A compositionally biased stretch (basic and acidic residues) spans 1–10 (MKRRASDRGA). The tract at residues 1–25 (MKRRASDRGAGETSARAKALGSGIS) is disordered. Positions 35-331 (FILGPRLGNS…ADVLEALSAI (297 aa)) constitute a Protein kinase domain. Residues 41-49 (LGNSPVPSI) and lysine 66 each bind ATP. Residue arginine 196 is the Proton acceptor of the active site.

The protein belongs to the protein kinase superfamily. CAMK Ser/Thr protein kinase family. Strongly expressed in heart, brain, placenta, lung, skeletal muscle, kidney, spleen, thymus, prostate, liver, pancreas, testis, ovary, small intestine, colon and peripheral blood leukocytes.

The protein resides in the nucleus. Its subcellular location is the cytoplasm. The enzyme catalyses L-seryl-[protein] + ATP = O-phospho-L-seryl-[protein] + ADP + H(+). It catalyses the reaction L-threonyl-[protein] + ATP = O-phospho-L-threonyl-[protein] + ADP + H(+). Functionally, may be a negative regulator of NF-kappa-B and p53-mediated gene transcription. The chain is Serine/threonine-protein kinase 40 (STK40) from Homo sapiens (Human).